The chain runs to 255 residues: Zinc-finger homeodomain protein 6 (255 aa).

The interval 1-35 (MEFRGHDEPVDEMGVAYGRTPPSSSSSPAASASAG) is disordered. The span at 21–35 (PPSSSSSPAASASAG) shows a compositional bias: low complexity. A ZF-HD dimerization-type; degenerate zinc finger spans residues 45-93 (YHECLRNHAAAMGGHVVDGCREFMPMPGDAADALKCAACGCHRSFHRKD). Pro residues predominate over residues 106–126 (PSPPTPRVPLLMPPPQPQPHP). 2 disordered regions span residues 106 to 181 (PSPP…KFTP) and 226 to 255 (NNKSSIGSSSGGGSRRQPQEQQSQQQQQQQ). Low complexity predominate over residues 139–153 (YHHTPSGSGGTTTES). The homeobox DNA-binding region spans 172 to 235 (RKRFRTKFTP…NNKSSIGSSS (64 aa)). Positions 240-255 (RRQPQEQQSQQQQQQQ) are enriched in low complexity.

Homo- and heterodimer with other ZFHD proteins.

The protein resides in the nucleus. Functionally, putative transcription factor. The chain is Zinc-finger homeodomain protein 6 (ZHD6) from Oryza sativa subsp. japonica (Rice).